A 179-amino-acid polypeptide reads, in one-letter code: Large ribosomal subunit protein uL6 (179 aa).

The protein belongs to the universal ribosomal protein uL6 family. Part of the 50S ribosomal subunit.

Its function is as follows. This protein binds to the 23S rRNA, and is important in its secondary structure. It is located near the subunit interface in the base of the L7/L12 stalk, and near the tRNA binding site of the peptidyltransferase center. This chain is Large ribosomal subunit protein uL6, found in Alkaliphilus oremlandii (strain OhILAs) (Clostridium oremlandii (strain OhILAs)).